Here is a 245-residue protein sequence, read N- to C-terminus: Type III pantothenate kinase (245 aa).

6–13 is an ATP binding site; sequence DVGNTAMK. Residues Tyr-93 and 100 to 103 each bind substrate; that span reads GVDR. The Proton acceptor role is filled by Asp-102. Position 121 (Asp-121) interacts with K(+). Ser-124 provides a ligand contact to ATP. Thr-175 is a substrate binding site.

This sequence belongs to the type III pantothenate kinase family. Homodimer. It depends on NH4(+) as a cofactor. K(+) is required as a cofactor.

The protein resides in the cytoplasm. It carries out the reaction (R)-pantothenate + ATP = (R)-4'-phosphopantothenate + ADP + H(+). It participates in cofactor biosynthesis; coenzyme A biosynthesis; CoA from (R)-pantothenate: step 1/5. Catalyzes the phosphorylation of pantothenate (Pan), the first step in CoA biosynthesis. The sequence is that of Type III pantothenate kinase from Alcanivorax borkumensis (strain ATCC 700651 / DSM 11573 / NCIMB 13689 / SK2).